The following is a 375-amino-acid chain: D-alanine--D-alanine ligase (375 aa).

In terms of domain architecture, ATP-grasp spans 145 to 348; that stretch reads KRLLRDADLE…YPALITRLIE (204 aa). ATP is bound at residue 175 to 230; sequence ITYLGSSLFVKPANQGSSVGVSKVINRISFDQALALAFCFDDKVLVESAINGRELE. The Mg(2+) site is built by D302, E315, and N317.

It belongs to the D-alanine--D-alanine ligase family. The cofactor is Mg(2+). Mn(2+) serves as cofactor.

Its subcellular location is the cytoplasm. It carries out the reaction 2 D-alanine + ATP = D-alanyl-D-alanine + ADP + phosphate + H(+). It functions in the pathway cell wall biogenesis; peptidoglycan biosynthesis. Cell wall formation. The chain is D-alanine--D-alanine ligase from Baumannia cicadellinicola subsp. Homalodisca coagulata.